The following is a 389-amino-acid chain: POU domain, class 5, transcription factor 3 (389 aa).

2 stretches are compositionally biased toward low complexity: residues 1-18 (MFSPDGGLPAAPFGLLPD) and 145-165 (LANLGSSGSSSGAASEGGHSS). Disordered stretches follow at residues 1 to 88 (MFSP…APPA) and 145 to 177 (LANLGSSGSSSGAASEGGHSSDSGDEDAPTSEE). Acidic residues predominate over residues 167-177 (SGDEDAPTSEE). One can recognise a POU-specific domain in the interval 170–244 (EDAPTSEELE…LLQRWLNEAE (75 aa)). Residues 264–323 (KRKRRTSIETNVKGTLESFFRKCVKPSPQEISQIAEDLNLDKDVVRVWFCNRRQKGKRLL) constitute a DNA-binding region (homeobox).

This sequence belongs to the POU transcription factor family.

The protein resides in the nucleus. Functionally, required for the maintenance of pluripotency and self-renewal of embryonic stem cells. Transcriptional activator that binds the DNA consensus sequence 5'-ATGCAAAT-3'. The polypeptide is POU domain, class 5, transcription factor 3 (POU5F3) (Gallus gallus (Chicken)).